Here is a 62-residue protein sequence, read N- to C-terminus: Large ribosomal subunit protein bL28 (62 aa).

Residues 1 to 24 (MGKQCFVTGRKASTGNNRSHALNS) are disordered. Polar residues predominate over residues 11–24 (KASTGNNRSHALNS).

It belongs to the bacterial ribosomal protein bL28 family.

The polypeptide is Large ribosomal subunit protein bL28 (Staphylococcus saprophyticus subsp. saprophyticus (strain ATCC 15305 / DSM 20229 / NCIMB 8711 / NCTC 7292 / S-41)).